We begin with the raw amino-acid sequence, 728 residues long: Catalase-peroxidase 1 (728 aa).

The signal sequence occupies residues 1–22 (MDKTQSSQGKCPVMHGANSAVA). The tryptophyl-tyrosyl-methioninium (Trp-Tyr) (with M-251) cross-link spans 97–225 (WHSAGTYRVA…LAAVMMGLIY (129 aa)). The active-site Proton acceptor is the His98. Residues 225 to 251 (YVNPEGVDGKPDPLRTAQDVRVTFARM) constitute a cross-link (tryptophyl-tyrosyl-methioninium (Tyr-Met) (with W-97)). A heme b-binding site is contributed by His266.

Belongs to the peroxidase family. Peroxidase/catalase subfamily. In terms of assembly, homodimer or homotetramer. Requires heme b as cofactor. Post-translationally, formation of the three residue Trp-Tyr-Met cross-link is important for the catalase, but not the peroxidase activity of the enzyme.

It catalyses the reaction H2O2 + AH2 = A + 2 H2O. The enzyme catalyses 2 H2O2 = O2 + 2 H2O. Its function is as follows. Bifunctional enzyme with both catalase and broad-spectrum peroxidase activity. This Shewanella sp. (strain MR-7) protein is Catalase-peroxidase 1.